A 178-amino-acid polypeptide reads, in one-letter code: ATP-dependent protease subunit HslV (178 aa).

Thr-5 is an active-site residue. Na(+) is bound by residues Ser-161, Cys-164, and Thr-167.

The protein belongs to the peptidase T1B family. HslV subfamily. As to quaternary structure, a double ring-shaped homohexamer of HslV is capped on each side by a ring-shaped HslU homohexamer. The assembly of the HslU/HslV complex is dependent on binding of ATP.

It is found in the cytoplasm. The catalysed reaction is ATP-dependent cleavage of peptide bonds with broad specificity.. Allosterically activated by HslU binding. Its function is as follows. Protease subunit of a proteasome-like degradation complex believed to be a general protein degrading machinery. The sequence is that of ATP-dependent protease subunit HslV from Syntrophomonas wolfei subsp. wolfei (strain DSM 2245B / Goettingen).